Consider the following 129-residue polypeptide: Ribosome-binding factor A (129 aa).

Belongs to the RbfA family. As to quaternary structure, monomer. Binds 30S ribosomal subunits, but not 50S ribosomal subunits or 70S ribosomes.

It is found in the cytoplasm. Its function is as follows. One of several proteins that assist in the late maturation steps of the functional core of the 30S ribosomal subunit. Associates with free 30S ribosomal subunits (but not with 30S subunits that are part of 70S ribosomes or polysomes). Required for efficient processing of 16S rRNA. May interact with the 5'-terminal helix region of 16S rRNA. This Marinomonas sp. (strain MWYL1) protein is Ribosome-binding factor A.